The primary structure comprises 452 residues: Putative tripartite motif-containing protein 49B (452 aa).

The RING-type zinc-finger motif lies at 15-56; it reads CPICMNYFIDPVTIDCGHSFCRPCFYLNWKDSPFLVQCSECT. The B box-type zinc finger occupies 88–129; the sequence is SEEQMCGTHRETKKMFCEVDRSLLCLLCSSSQEHRDHRHCPI. The Zn(2+) site is built by Cys93, His96, Cys115, and His121. Positions 269–452 constitute a B30.2/SPRY domain; sequence ELSAGPITGL…LRPIFCCIHF (184 aa).

This sequence belongs to the TRIM/RBCC family.

The protein is Putative tripartite motif-containing protein 49B (TRIM49B) of Homo sapiens (Human).